The following is a 293-amino-acid chain: Undecaprenyl-diphosphatase (293 aa).

The next 7 membrane-spanning stretches (helical) occupy residues 57–77 (PGVSATAVIQLGSILAVIVYF), 106–126 (LAIAIGTMPILLAGMAIKLFW), 134–154 (IRSLPSIAVVSIVMALLLALA), 172–192 (GFVVGLAQALALIPGVSRSGS), 212–232 (FLLGIPAITLAGLVELKDAFA), 239–259 (VLPLLVGIVSAAFVSWLAIDW), and 268–288 (STWIFVAYRLLFGVLVLAWWL).

The protein belongs to the UppP family.

It is found in the cell inner membrane. It carries out the reaction di-trans,octa-cis-undecaprenyl diphosphate + H2O = di-trans,octa-cis-undecaprenyl phosphate + phosphate + H(+). In terms of biological role, catalyzes the dephosphorylation of undecaprenyl diphosphate (UPP). Confers resistance to bacitracin. This is Undecaprenyl-diphosphatase from Prochlorococcus marinus (strain MIT 9303).